Consider the following 35-residue polypeptide: Cytochrome b6-f complex subunit 5 (35 aa).

A helical transmembrane segment spans residues 5-25 (LLCGIVLGLIPVTLTGLFVAA).

This sequence belongs to the PetG family. As to quaternary structure, the 4 large subunits of the cytochrome b6-f complex are cytochrome b6, subunit IV (17 kDa polypeptide, PetD), cytochrome f and the Rieske protein, while the 4 small subunits are PetG, PetL, PetM and PetN. The complex functions as a dimer.

It is found in the plastid. It localises to the organellar chromatophore thylakoid membrane. Its function is as follows. Component of the cytochrome b6-f complex, which mediates electron transfer between photosystem II (PSII) and photosystem I (PSI), cyclic electron flow around PSI, and state transitions. PetG is required for either the stability or assembly of the cytochrome b6-f complex. In Paulinella chromatophora, this protein is Cytochrome b6-f complex subunit 5.